The following is a 99-amino-acid chain: Aspartyl/glutamyl-tRNA(Asn/Gln) amidotransferase subunit C (99 aa).

The protein belongs to the GatC family. As to quaternary structure, heterotrimer of A, B and C subunits.

The enzyme catalyses L-glutamyl-tRNA(Gln) + L-glutamine + ATP + H2O = L-glutaminyl-tRNA(Gln) + L-glutamate + ADP + phosphate + H(+). It catalyses the reaction L-aspartyl-tRNA(Asn) + L-glutamine + ATP + H2O = L-asparaginyl-tRNA(Asn) + L-glutamate + ADP + phosphate + 2 H(+). Its function is as follows. Allows the formation of correctly charged Asn-tRNA(Asn) or Gln-tRNA(Gln) through the transamidation of misacylated Asp-tRNA(Asn) or Glu-tRNA(Gln) in organisms which lack either or both of asparaginyl-tRNA or glutaminyl-tRNA synthetases. The reaction takes place in the presence of glutamine and ATP through an activated phospho-Asp-tRNA(Asn) or phospho-Glu-tRNA(Gln). In Paraburkholderia xenovorans (strain LB400), this protein is Aspartyl/glutamyl-tRNA(Asn/Gln) amidotransferase subunit C.